The primary structure comprises 223 residues: Phosphoribosylformylglycinamidine synthase subunit PurQ (223 aa).

Positions 4–223 constitute a Glutamine amidotransferase type-1 domain; the sequence is KIGVITFPGT…FLSAIGTIAA (220 aa). Cys87 (nucleophile) is an active-site residue. Catalysis depends on residues His195 and Glu197.

In terms of assembly, part of the FGAM synthase complex composed of 1 PurL, 1 PurQ and 2 PurS subunits.

Its subcellular location is the cytoplasm. It carries out the reaction N(2)-formyl-N(1)-(5-phospho-beta-D-ribosyl)glycinamide + L-glutamine + ATP + H2O = 2-formamido-N(1)-(5-O-phospho-beta-D-ribosyl)acetamidine + L-glutamate + ADP + phosphate + H(+). The catalysed reaction is L-glutamine + H2O = L-glutamate + NH4(+). The protein operates within purine metabolism; IMP biosynthesis via de novo pathway; 5-amino-1-(5-phospho-D-ribosyl)imidazole from N(2)-formyl-N(1)-(5-phospho-D-ribosyl)glycinamide: step 1/2. Its function is as follows. Part of the phosphoribosylformylglycinamidine synthase complex involved in the purines biosynthetic pathway. Catalyzes the ATP-dependent conversion of formylglycinamide ribonucleotide (FGAR) and glutamine to yield formylglycinamidine ribonucleotide (FGAM) and glutamate. The FGAM synthase complex is composed of three subunits. PurQ produces an ammonia molecule by converting glutamine to glutamate. PurL transfers the ammonia molecule to FGAR to form FGAM in an ATP-dependent manner. PurS interacts with PurQ and PurL and is thought to assist in the transfer of the ammonia molecule from PurQ to PurL. The protein is Phosphoribosylformylglycinamidine synthase subunit PurQ of Corynebacterium efficiens (strain DSM 44549 / YS-314 / AJ 12310 / JCM 11189 / NBRC 100395).